The primary structure comprises 473 residues: Iron transporter SMF3 (473 aa).

The next 2 membrane-spanning stretches (helical) occupy residues 14–34 (FIGPGILVSVAYMDPGNYATS) and 44–64 (TLLFSIFISNIFAVLLQCLCV). Residue N87 is glycosylated (N-linked (GlcNAc...) asparagine). A run of 9 helical transmembrane segments spans residues 97–117 (AIIATDLAEVVGTAIALQILF), 119–139 (IPLTWGVLLTVLDVLVILMFY), 152–172 (FEFGVGILVIGTCICFVLELF), 198–218 (ALYISLGILGATVMPHSLYLG), 257–277 (LIISLFLIATFVNSAILIVAG), 297–317 (LLVHYISPAAGLIFALAMLCS), 352–372 (LIAIVPCLFVTLTMGEKGISD), 373–393 (ILNFSQVVLSLILPIVSAPLI), and 448–468 (VFVWALIGSLNCYLVISYLLG).

This sequence belongs to the NRAMP family.

Its subcellular location is the vacuole membrane. The protein resides in the endoplasmic reticulum membrane. Functionally, has a role in controlling the cellular iron ion levels. Mobilizes vacuolar stores of iron in conditions of low iron levels. The polypeptide is Iron transporter SMF3 (SMF3) (Saccharomyces cerevisiae (strain ATCC 204508 / S288c) (Baker's yeast)).